Reading from the N-terminus, the 242-residue chain is Large ribosomal subunit protein uL3 (242 aa).

Gln151 is subject to N5-methylglutamine.

It belongs to the universal ribosomal protein uL3 family. Part of the 50S ribosomal subunit. Forms a cluster with proteins L14 and L19. Methylated by PrmB.

Functionally, one of the primary rRNA binding proteins, it binds directly near the 3'-end of the 23S rRNA, where it nucleates assembly of the 50S subunit. The protein is Large ribosomal subunit protein uL3 of Zymomonas mobilis subsp. mobilis (strain ATCC 31821 / ZM4 / CP4).